Reading from the N-terminus, the 225-residue chain is Deoxyribose-phosphate aldolase (225 aa).

Catalysis depends on D94, which acts as the Proton donor/acceptor. K158 serves as the catalytic Schiff-base intermediate with acetaldehyde. K187 functions as the Proton donor/acceptor in the catalytic mechanism.

It belongs to the DeoC/FbaB aldolase family. DeoC type 1 subfamily.

The protein resides in the cytoplasm. The catalysed reaction is 2-deoxy-D-ribose 5-phosphate = D-glyceraldehyde 3-phosphate + acetaldehyde. The protein operates within carbohydrate degradation; 2-deoxy-D-ribose 1-phosphate degradation; D-glyceraldehyde 3-phosphate and acetaldehyde from 2-deoxy-alpha-D-ribose 1-phosphate: step 2/2. Its function is as follows. Catalyzes a reversible aldol reaction between acetaldehyde and D-glyceraldehyde 3-phosphate to generate 2-deoxy-D-ribose 5-phosphate. In Thermococcus gammatolerans (strain DSM 15229 / JCM 11827 / EJ3), this protein is Deoxyribose-phosphate aldolase.